The primary structure comprises 213 residues: Adenylate kinase (213 aa).

14 to 19 (GSGKGT) serves as a coordination point for ATP. The interval 34-63 (SSGNLLRSAIKASTPLGIKASEYIDEGQLV) is NMP. AMP-binding positions include serine 35, arginine 40, 61-63 (QLV), 89-92 (GFPR), and glutamine 96. The segment at 129–162 (SRFICPSCNFVYNQSQGFRECPTCHSELVRRSDD) is LID. Arginine 130 contributes to the ATP binding site. Cysteine 133 and cysteine 136 together coordinate Zn(2+). Residue 139-140 (VY) coordinates ATP. 2 residues coordinate Zn(2+): cysteine 149 and cysteine 152. AMP contacts are provided by arginine 159 and arginine 170. Lysine 198 serves as a coordination point for ATP.

This sequence belongs to the adenylate kinase family. In terms of assembly, monomer.

Its subcellular location is the cytoplasm. It carries out the reaction AMP + ATP = 2 ADP. It participates in purine metabolism; AMP biosynthesis via salvage pathway; AMP from ADP: step 1/1. Functionally, catalyzes the reversible transfer of the terminal phosphate group between ATP and AMP. Plays an important role in cellular energy homeostasis and in adenine nucleotide metabolism. This Chlamydia felis (strain Fe/C-56) (Chlamydophila felis) protein is Adenylate kinase.